Consider the following 231-residue polypeptide: Cytidylate kinase (231 aa).

Residue 18–26 coordinates ATP; the sequence is GPSGTGKSS.

This sequence belongs to the cytidylate kinase family. Type 1 subfamily.

The protein resides in the cytoplasm. It carries out the reaction CMP + ATP = CDP + ADP. It catalyses the reaction dCMP + ATP = dCDP + ADP. The sequence is that of Cytidylate kinase from Streptomyces griseus subsp. griseus (strain JCM 4626 / CBS 651.72 / NBRC 13350 / KCC S-0626 / ISP 5235).